A 1252-amino-acid polypeptide reads, in one-letter code: Putative late blight resistance protein homolog R1B-11 (1252 aa).

Positions 543 to 566 form a coiled coil; it reads RYSDSLAFLKNQLQVIQTEFESLQ. 2 NB-ARC domains span residues 684 to 736 and 786 to 830; these read SVRR…RSRI and SYHV…SSEG. LRR repeat units follow at residues 955-980, 998-1026, 1077-1100, 1103-1125, 1126-1149, 1187-1212, and 1213-1236; these read FKFL…PYLR, LWNL…VWDM, LKHL…KVSS, FPKL…ADDA, FPNL…CFTD, LVII…RLSS, and LPGI…DVDA. The HMA domain occupies 1188–1252; it reads VIIKKLVLKF…VGKLNKRDML (65 aa).

It belongs to the disease resistance NB-LRR family.

It localises to the cytoplasm. The protein localises to the membrane. Functionally, confers resistance to late blight (Phytophthora infestans) races carrying the avirulence gene Avr1. Resistance proteins guard the plant against pathogens that contain an appropriate avirulence protein via an indirect interaction with this avirulence protein. That triggers a defense system including the hypersensitive response, which restricts the pathogen growth. The polypeptide is Putative late blight resistance protein homolog R1B-11 (R1B-11) (Solanum demissum (Wild potato)).